The following is a 588-amino-acid chain: Aspartate--tRNA ligase (588 aa).

E174 provides a ligand contact to L-aspartate. The aspartate stretch occupies residues Q198–K201. R220 is an L-aspartate binding site. ATP-binding positions include R220–E222 and Q229. An L-aspartate-binding site is contributed by H448. Residue E482 participates in ATP binding. L-aspartate is bound at residue R489. G534–R537 is a binding site for ATP.

Belongs to the class-II aminoacyl-tRNA synthetase family. Type 1 subfamily. As to quaternary structure, homodimer.

Its subcellular location is the cytoplasm. The enzyme catalyses tRNA(Asp) + L-aspartate + ATP = L-aspartyl-tRNA(Asp) + AMP + diphosphate. Functionally, catalyzes the attachment of L-aspartate to tRNA(Asp) in a two-step reaction: L-aspartate is first activated by ATP to form Asp-AMP and then transferred to the acceptor end of tRNA(Asp). The polypeptide is Aspartate--tRNA ligase (Xanthomonas oryzae pv. oryzae (strain PXO99A)).